The chain runs to 258 residues: Axonemal dynein light intermediate polypeptide 1 (258 aa).

Disordered stretches follow at residues 1–60 (MIPP…CVPD) and 202–231 (DLERQVNEQKAKCEATEKRESERRQVEEKK). Positions 176–255 (MRKALQAEQG…LKAQLEGIIA (80 aa)) form a coiled coil.

The protein belongs to the inner dynein arm light chain family. In terms of assembly, interacts with CFAP45. Interacts with DYNC1H1. Predominantly expressed in the testis, also detected at lower levels in several tissues expressing cilia. Strongly expressed in elongating spermatid cells (at protein level).

It is found in the cell projection. The protein localises to the cilium. The protein resides in the flagellum. Its subcellular location is the dynein axonemal particle. It localises to the cytoplasm. Functionally, involved in sperm flagellum assembly. The sequence is that of Axonemal dynein light intermediate polypeptide 1 from Mus musculus (Mouse).